Consider the following 288-residue polypeptide: Structure-specific endonuclease subunit SLX1 (288 aa).

A GIY-YIG domain is found at 10–93 (DFYCSYLLRS…QHSYKTRFIE (84 aa)). Residues 209–265 (CMICDKKIDYIHDEGTQMVGFCSDDECDFLSCLSCLYKEFTKNSKQIIPKSGHCPNC) form an SLX1-type zinc finger.

It belongs to the SLX1 family. Forms a heterodimer with SLX4. Requires a divalent metal cation as cofactor.

It is found in the nucleus. Its function is as follows. Catalytic subunit of the SLX1-SLX4 structure-specific endonuclease that resolves DNA secondary structures generated during DNA repair and recombination. Has endonuclease activity towards branched DNA substrates, introducing single-strand cuts in duplex DNA close to junctions with ss-DNA. The chain is Structure-specific endonuclease subunit SLX1 from Kluyveromyces lactis (strain ATCC 8585 / CBS 2359 / DSM 70799 / NBRC 1267 / NRRL Y-1140 / WM37) (Yeast).